A 525-amino-acid chain; its full sequence is Pre-mRNA-processing factor 19 homolog 2 (525 aa).

A U-box domain is found at 1–70 (MNCAISGEVP…PKTLHTASIP (70 aa)). WD repeat units lie at residues 220–261 (TNKP…STLT), 262–301 (GHSK…NYAC), 307–346 (DHSA…CLAQ), 351–390 (SKNV…NVAK), 393–431 (GHTG…NFKS), 433–469 (LSAD…AEWN), and 478–517 (SGTG…KANV). The DWD box motif lies at 409–424 (FLATAAEDGVRLWDLR).

This sequence belongs to the WD repeat PRP19 family. In terms of assembly, homotetramer. Component of the multiprotein assembly MOS4-associated complex (MAC) at least composed of MOS4, CDC5, PRL1 and PRP19 which is related to the PRP19C/Prp19 complex/NTC/Nineteen complex identified in other organisms. Associated with the spliceosome.

The protein resides in the nucleus. The catalysed reaction is S-ubiquitinyl-[E2 ubiquitin-conjugating enzyme]-L-cysteine + [acceptor protein]-L-lysine = [E2 ubiquitin-conjugating enzyme]-L-cysteine + N(6)-ubiquitinyl-[acceptor protein]-L-lysine.. It participates in protein modification; protein ubiquitination. Functionally, probable ubiquitin-protein ligase which is mainly involved pre-mRNA splicing and DNA repair. Component of the MAC complex that probably regulates defense responses through transcriptional control and thereby is essential for plant innate immunity. This is Pre-mRNA-processing factor 19 homolog 2 (PRP19B) from Arabidopsis thaliana (Mouse-ear cress).